Here is a 348-residue protein sequence, read N- to C-terminus: DNA ligase C1 (348 aa).

Residue lysine 32 is the N6-AMP-lysine intermediate of the active site.

This sequence belongs to the ATP-dependent DNA ligase family. Requires a divalent metal cation as cofactor.

It carries out the reaction ATP + (deoxyribonucleotide)n-3'-hydroxyl + 5'-phospho-(deoxyribonucleotide)m = (deoxyribonucleotide)n+m + AMP + diphosphate.. In terms of biological role, DNA ligase that seals nicks in double-stranded DNA during DNA replication, DNA recombination and DNA repair. Has weak intrinsic nick joining activities and accumulates DNA-adenylate. Acts as a backup for LigD in the Ku-LigD-dependent NHEJ pathway. This is DNA ligase C1 (ligC) from Mycolicibacterium smegmatis (strain ATCC 700084 / mc(2)155) (Mycobacterium smegmatis).